The following is a 137-amino-acid chain: DNA-binding protein H-NS (137 aa).

Residues 13–65 adopt a coiled-coil conformation; that stretch reads TLRAQARECTLETLEEMLEKLEVVVNERREEESAAAAEVEERTRKLQQYREML. Residues 112-117 mediate DNA binding; that stretch reads QGRTPA.

Belongs to the histone-like protein H-NS family. In terms of assembly, homodimer that oligomerizes on DNA into higher-order complexes that form bridges between disparate regions of DNA compacting it. Interacts with Hha, YdgT and StpA.

Its subcellular location is the cytoplasm. The protein resides in the nucleoid. A DNA-binding protein implicated in transcriptional repression and chromosome organization and compaction. Binds AT-rich DNA, repressing its transcription; about 754/4438 tested genes (15%) bind to H-NS, 70% of these are AT-rich and correspond to horizontally transferred geness (HTG), thus playing a central role in silencing foreign genes. This offers the selective advantage of silencing foreign DNA. Binds nucleation sites in AT-rich DNA and bridges them, forming higher-order nucleoprotein complexes and condensing the chromosome. A subset of genes are repressed by H-NS in association with Hha and/or YdgT. The polypeptide is DNA-binding protein H-NS (hns) (Salmonella typhimurium (strain 14028s / SGSC 2262)).